Consider the following 397-residue polypeptide: Dimethyladenosine transferase 2, mitochondrial (397 aa).

The N-terminal 44 residues, 1–44 (MRGLAMRLPPRLALSVLAGRGPSCILGSGAATRKDWQERNRRSF), are a transit peptide targeting the mitochondrion. Isoleucine 75, glutamate 124, and aspartate 150 together coordinate S-adenosyl-L-methionine. The DNA-binding stretch occupies residues 329–330 (KR).

It belongs to the class I-like SAM-binding methyltransferase superfamily. rRNA adenine N(6)-methyltransferase family. KsgA subfamily. In terms of assembly, homodimer. Component of the mitochondrial transcription initiation complex, composed at least of TFB2M, TFAM and POLRMT. In this complex TFAM recruits POLRMT to the promoter whereas TFB2M induces structural changes in POLRMT to enable promoter opening and trapping of the DNA non-template strand. Interacts with mitochondrial RNA polymerase POLRMT. Interacts with TFAM.

It localises to the mitochondrion. The enzyme catalyses adenosine in rRNA + S-adenosyl-L-methionine = N(6)-methyladenosine in rRNA + S-adenosyl-L-homocysteine + H(+). Its function is as follows. S-adenosyl-L-methionine-dependent rRNA methyltransferase which may methylate two specific adjacent adenosines in the loop of a conserved hairpin near the 3'-end of 12S mitochondrial rRNA. Component of the mitochondrial transcription initiation complex, composed at least of TFB2M, TFAM and POLRMT that is required for basal transcription of mitochondrial DNA. In this complex TFAM recruits POLRMT to a specific promoter whereas TFB2M induces structural changes in POLRMT to enable promoter opening and trapping of the DNA non-template strand. Stimulates transcription independently of the methyltransferase activity. The sequence is that of Dimethyladenosine transferase 2, mitochondrial from Rattus norvegicus (Rat).